We begin with the raw amino-acid sequence, 1728 residues long: MDSSSIAHESDIVSTERNILPERFISNKQQGNYLEDGSGDGNGKAAEHWLLAAIFNFFWVISYFISGSTHIAFRSSWYIVSLLLLKFPKWIIVEANHIHLTIPFSVLVVTLAIIFYVSYEFLKGRLLSEYKNLTSDLNTDSLNSKNSKSSRLLHHDSKDSNTTRRRRYSSGKLLSSALHESHSGINGGDDGDDTFLSSYLDQFLSAIRIFGYLEKPVFHDLTKNMKTQKLDEGEILLLDNSVGFAIVVEGTLDIYHEVEEKGNMNDIDGDFMVDDNQSIYSILKRKKKKYSTSRHGQYNNNSDPGHYNGHNVNGDDEDDDDGILQMRSSSRNQNIPSFDAIESSSSDEESDINDGDSESQSESDDESTGFIRLKDGLGKFQLLNTVKAGNPVSSLVNILNLFTSANDNVTSPSRTGRMDSNYTNPVERPTSKLSTSIEESAMRLELGKYSLSPTEASYRSTSNPSNNFSKDNDPLSKSISGPDAVTTPSLPPLNNRAFVIPKVVARAATDCTIAIIPPQAFAKLKAKYPRSASHIIQMILTKLYHVTFQTAHKYLGLTQEIAYTELLLNRTVSYDLPNYLKEIVIDRFKDKGKDMNLQKGFQSPTSSRLTSNFNGNSNNQRTNSRNSQALMSTRDLRKTRPELSQQSSMIHSPTPITGSRHVVLESRDKYNPGDLLSNVPLSRINLASPSSRGFDYSSMKKESSPQSSVNSRKRSTTGERPRLLKRPSIYNNQSSSRSDALKGNNSNNKDINFTSFSAQEETEDSVVRMALVEAMLTYLGVNKTNMSILPGIYDGAPSEPHSHRASEISLVSSYTSSAAPQTTIRILPKEYAIVSTRKQKQSSKKRRKYKEEISPTLDYEYAKNEFAQAIELQYFKQGTVIVEQDTRGKGLYYVVSGKIDVTTSTVSDHEIFNSTRDKKKKKSKTLFTIESGGIAGYLSSLVSYKSFVTLIAKTDVYVGFLPYQTLEKLCDKYFLIYLRIAESLTSLLTPRMLKLDHALEWLHLNASDTLFNQGDPANGIYVILNGRLRQLRNPELEENSTDYPNDGEEKDSSRDSTIVMGELGQGESFGEVEVLTAMDRISSMVAVRDTELARIPRSLFELLAIEHPSIMIRVSRLVAKKILGQGQANMALPKIGSGSNLRHDLNLTIPPSSSSSIHTHSYGNDNSNQMNNANFRTITILPITSGLPVESFAMKLVHAFKQVGRTTIGLNQRTTLSHLGRHAFDKLAKLKESGYFAELEELYQTVVYIADTPVKSSWTKTCIAQADCVILLARADDSPEIGEYERLLLKSKTTSRTELVLLHNERSVEPGMTQRWLRSRSWVHNHYHIQFAMDSLVNSSNVKDTGGNIGALNLVDKFIQTELGRKTQYNISKLLPESIKMTVENFSSRFMKRKRQYYTPVHRHKDDFLRLARILSGQAIGLVLGGGGARGLSHLGILQALEERGIPIDMIGGTSIGSFVGGLYAKDYDLVPIFGRIKKFAGRISSIWRMLSDFTWPVTSYTTGHEFNRGIWKSFGDTRIEDFWVQYFCNSTNITESVQEIHSYGYAWRYVRASMSLAGLLPPIEDNGSMLLDGGYVDNLPVLEMKARGCNTIFAVDVGSVDDRTPMKYGDSLNGFWIILNRWNPFSKHPNIPTMAEIQVRLGYVSSVNALEKAKRTPGVIYVRPPIENYATLDFGKFEEIYKVGADFGKVFLQALAEEGKMPYIPGSNADLVGDVETGFFLHRRNSI.

At 1-44 (MDSSSIAHESDIVSTERNILPERFISNKQQGNYLEDGSGDGNGK) the chain is on the cytoplasmic side. A helical transmembrane segment spans residues 45-65 (AAEHWLLAAIFNFFWVISYFI). Residues 66–97 (SGSTHIAFRSSWYIVSLLLLKFPKWIIVEANH) lie on the Lumenal side of the membrane. Residues 98-118 (IHLTIPFSVLVVTLAIIFYVS) traverse the membrane as a helical segment. Topologically, residues 119–1728 (YEFLKGRLLS…GFFLHRRNSI (1610 aa)) are cytoplasmic. The segment covering 141-150 (SLNSKNSKSS) has biased composition (low complexity). Disordered stretches follow at residues 141-167 (SLNS…RRRR), 285-368 (RKKK…DEST), 406-436 (NDNV…LSTS), 454-488 (TEAS…VTTP), 596-660 (NLQK…TGSR), and 687-756 (ASPS…FTSF). Basic and acidic residues predominate over residues 153–162 (LHHDSKDSNT). Composition is skewed to polar residues over residues 293–303 (SRHGQYNNNSD) and 326–336 (MRSSSRNQNIP). Residues 345 to 367 (SSDEESDINDGDSESQSESDDES) show a composition bias toward acidic residues. 3 stretches are compositionally biased toward polar residues: residues 406 to 424 (NDNV…NYTN), 454 to 479 (TEAS…SKSI), and 599 to 609 (KGFQSPTSSRL). Low complexity predominate over residues 610-628 (TSNFNGNSNNQRTNSRNSQ). Composition is skewed to polar residues over residues 642–657 (ELSQ…TPIT) and 729–756 (IYNN…FTSF). Residues 854-987 (SPTL…LTSL) and 983-1121 (SLTS…VAKK) each bind a nucleoside 3',5'-cyclic phosphate. The disordered stretch occupies residues 1034–1055 (PELEENSTDYPNDGEEKDSSRD). The span at 1036 to 1049 (LEENSTDYPNDGEE) shows a compositional bias: acidic residues. The 165-residue stretch at 1422–1586 (LVLGGGGARG…VDNLPVLEMK (165 aa)) folds into the PNPLA domain. Residues 1426–1431 (GGGARG) carry the GXGXXG motif. The GXSXG signature appears at 1453 to 1457 (GTSIG). Ser1455 acts as the Nucleophile in catalysis. Asp1573 (proton acceptor) is an active-site residue. The short motif at 1573-1575 (DGG) is the DGA/G element.

Belongs to the NTE family.

It is found in the endoplasmic reticulum membrane. The enzyme catalyses a 1-acyl-sn-glycero-3-phosphocholine + H2O = sn-glycerol 3-phosphocholine + a fatty acid + H(+). With respect to regulation, inhibited by organophosphorus esters. In terms of biological role, intracellular phospholipase B that catalyzes the double deacylation of phosphatidylcholine (PC) to glycerophosphocholine (GroPCho). Plays an important role in membrane lipid homeostasis. Responsible for the rapid PC turnover in response to inositol, elevated temperatures, or when choline is present in the growth medium. In Candida glabrata (strain ATCC 2001 / BCRC 20586 / JCM 3761 / NBRC 0622 / NRRL Y-65 / CBS 138) (Yeast), this protein is Lysophospholipase NTE1 (NTE1).